The primary structure comprises 307 residues: Mitochondrial thiamine pyrophosphate carrier 1 (307 aa).

Solcar repeat units follow at residues 13–95, 105–190, and 203–305; these read VSTT…IGSF, SPQL…IKIF, and PFTL…FMNK. Helical transmembrane passes span 19–36, 76–96, 108–126, 160–184, 210–226, and 280–297; these read LVAGSLSGLFARTCIAPL, IMYIIYGGAQFGSYTYIGSFL, LYSCLVGSLAGMTSSLASY, MGFFSGCGSSMINIGLNTAIMFGVY, LAGPISGFTSKLATFPL, and GVTMSLIKSVPSTAISLW.

This sequence belongs to the mitochondrial carrier (TC 2.A.29) family.

Its subcellular location is the mitochondrion inner membrane. In terms of biological role, mitochondrial transporter that mediates uptake of thiamine pyrophosphate (ThPP) into mitochondria. The chain is Mitochondrial thiamine pyrophosphate carrier 1 (TPC1) from Candida glabrata (strain ATCC 2001 / BCRC 20586 / JCM 3761 / NBRC 0622 / NRRL Y-65 / CBS 138) (Yeast).